The sequence spans 388 residues: Chorismate synthase (388 aa).

Residues arginine 39 and arginine 45 each contribute to the NADP(+) site. FMN-binding positions include 130-132 (RSS), 251-252 (NA), glycine 296, 311-315 (KPIPT), and arginine 337.

It belongs to the chorismate synthase family. In terms of assembly, homotetramer. Requires FMNH2 as cofactor.

It carries out the reaction 5-O-(1-carboxyvinyl)-3-phosphoshikimate = chorismate + phosphate. The protein operates within metabolic intermediate biosynthesis; chorismate biosynthesis; chorismate from D-erythrose 4-phosphate and phosphoenolpyruvate: step 7/7. Its function is as follows. Catalyzes the anti-1,4-elimination of the C-3 phosphate and the C-6 proR hydrogen from 5-enolpyruvylshikimate-3-phosphate (EPSP) to yield chorismate, which is the branch point compound that serves as the starting substrate for the three terminal pathways of aromatic amino acid biosynthesis. This reaction introduces a second double bond into the aromatic ring system. The sequence is that of Chorismate synthase from Streptococcus pneumoniae serotype 19F (strain G54).